The following is a 119-amino-acid chain: Movement protein TGB2 (119 aa).

The Cytoplasmic portion of the chain corresponds to 1–13; the sequence is MVRNNEIGARPNK. The chain crosses the membrane as a helical span at residues 14–34; it reads YWPVVAAVVAICLFGFLTVTN. The Lumenal portion of the chain corresponds to 35-79; the sequence is QKHATQSGDNIHKFANGGQYRDGSKSIKYNCNNPRAYNGSSSNIT. A helical transmembrane segment spans residues 80-100; it reads FSQLFLPVLLIGAALYAYLWF. The Cytoplasmic portion of the chain corresponds to 101–119; it reads TRPDCSVTCRGDCCRSYGG.

Belongs to the virgaviridae/benyvirus TGB2 movement protein family. In terms of assembly, interacts with movement protein TGB3. TGB1-TGB3-TGB2 complex formation is enhanced by ATP hydrolysis.

It localises to the host cell junction. Its subcellular location is the host plasmodesma. The protein localises to the host endoplasmic reticulum membrane. The protein resides in the host cytoplasm. It is found in the host cytoskeleton. It localises to the host chloroplast envelope. Its function is as follows. Participates in the transport of viral genome to neighboring plant cells directly through plasmodesmata, without any budding. TGBp2 and TGBp3 are necessary for intracellular delivery of TGBp1-containing vRNPs to plasmodesmata. Can gate plasmodesmata and increase their size exclusion limit. To a lesser extent than TGB3, induces host actin cytoskeleton network thickening, which probably plays a major role in virus cell-to-cell movement. Binds ssRNA in a sequence non-specific manner. The chain is Movement protein TGB2 from Potato mop-top virus (isolate Potato/Sweden/Sw) (PMTV).